The primary structure comprises 276 residues: uncharacterized protein (276 aa).

This is an uncharacterized protein from Methanocaldococcus jannaschii (strain ATCC 43067 / DSM 2661 / JAL-1 / JCM 10045 / NBRC 100440) (Methanococcus jannaschii).